A 235-amino-acid polypeptide reads, in one-letter code: uncharacterized protein (235 aa).

The protein belongs to the UreF family.

It is found in the cytoplasm. It localises to the nucleus. Its function is as follows. Probably facilitates nickel incorporation. This is an uncharacterized protein from Schizosaccharomyces pombe (strain 972 / ATCC 24843) (Fission yeast).